Reading from the N-terminus, the 1758-residue chain is RanBP2-like and GRIP domain-containing protein 4 (1758 aa).

A Phosphoserine modification is found at Ser21. TPR repeat units follow at residues 60–93 (PRAHRFLGLLYELEENTEKAVECYRRSVELNPTQ) and 584–617 (QKMGSGLNSFYDQREYIGRSVHYWKKVLPLLKII). A disordered region spans residues 761 to 805 (DPLYKNGSLRNADSEIKHSTPSPTKYSLSPSKSYKYSPKTPPRWA). Over residues 779–798 (STPSPTKYSLSPSKSYKYSP) the composition is skewed to low complexity. In terms of domain architecture, RanBD1 1 spans 1037-1173 (HFEPVVQMPE…FEECQQLLLD (137 aa)). Disordered stretches follow at residues 1213-1249 (QTKVTEEENKGSGTGAAGASDTTIKPNPENTGPTLEW) and 1295-1332 (SFKSALSPSKSPAKLNQSGTSVGTDEESDVTQEEERDG). Residues 1236–1245 (IKPNPENTGP) are compositionally biased toward polar residues. Residues 1295–1309 (SFKSALSPSKSPAKL) show a composition bias toward low complexity. The span at 1318–1330 (TDEESDVTQEEER) shows a compositional bias: acidic residues. Residues 1334 to 1470 (YFEPVVPLPD…FDEAKTAQEK (137 aa)) enclose the RanBD1 2 domain. A compositionally biased stretch (polar residues) spans 1583-1594 (SETSSVAQSGSE). The tract at residues 1583–1621 (SETSSVAQSGSESKVEPKKCELSKNSDIEQSSDSKVKNL) is disordered. Residues 1595 to 1618 (SKVEPKKCELSKNSDIEQSSDSKV) are compositionally biased toward basic and acidic residues. In terms of domain architecture, GRIP spans 1703 to 1753 (QEESAANVEHLKNVLLQFIFLKPGSERERLLPVINTMLQLSPEEKGKLAAV).

This Homo sapiens (Human) protein is RanBP2-like and GRIP domain-containing protein 4 (RGPD4).